A 347-amino-acid chain; its full sequence is Haptoglobin (347 aa).

Positions 1-18 (MRALGAVVALLLCGQLFA) are cleaved as a signal peptide. The Sushi domain maps to 31–88 (DSCPKPPEIPKGYVEHMVRYHCQTYYKLRTAGDGVYTLDSNKQWTNKVTGEKLPECEA). 2 disulfide bridges follow: cysteine 52–cysteine 86 and cysteine 90–cysteine 207. A Peptidase S1 domain is found at 103-345 (IMGGSLDAKG…ILDWIQTTIA (243 aa)). 4 N-linked (GlcNAc...) asparagine glycosylation sites follow: asparagine 125, asparagine 151, asparagine 183, and asparagine 232. 2 disulfide bridges follow: cysteine 250–cysteine 281 and cysteine 292–cysteine 322. An interaction with CD163 region spans residues 259–264 (VPEKKT).

The protein belongs to the peptidase S1 family. Tetramer of two alpha and two beta chains; disulfide-linked. The hemoglobin/haptoglobin complex is composed of a haptoglobin dimer bound to two hemoglobin alpha-beta dimers. Interacts with CD163. Interacts with ERGIC3. Expressed by the liver and secreted in plasma.

It localises to the secreted. Functionally, as a result of hemolysis, hemoglobin is found to accumulate in the kidney and is secreted in the urine. Haptoglobin captures, and combines with free plasma hemoglobin to allow hepatic recycling of heme iron and to prevent kidney damage. Haptoglobin also acts as an antioxidant, has antibacterial activity and plays a role in modulating many aspects of the acute phase response. Hemoglobin/haptoglobin complexes are rapidly cleared by the macrophage CD163 scavenger receptor expressed on the surface of liver Kupfer cells through an endocytic lysosomal degradation pathway. The chain is Haptoglobin (HP) from Sus scrofa (Pig).